The following is a 1287-amino-acid chain: DNA-directed RNA polymerase 147 kDa polypeptide (1287 aa).

It belongs to the poxviridae DNA-directed RNA polymerase 147 kDa subunit family. As to quaternary structure, the DNA-dependent RNA polymerase used for intermediate and late genes expression consists of eight subunits Rpo30/OPG66, Rpo7/OPG90, Rpo22/OPG103, Rpo147/OPG105, Rpo18/OPG119, Rpo19/OPG131, Rpo132/OPG151 and Rpo35/OPG156. The same holoenzyme, with the addition of the transcription-specificity factor OPG109, is used for early gene expression.

It is found in the virion. The enzyme catalyses RNA(n) + a ribonucleoside 5'-triphosphate = RNA(n+1) + diphosphate. Functionally, part of the DNA-dependent RNA polymerase which catalyzes the transcription of viral DNA into RNA using the four ribonucleoside triphosphates as substrates. Responsible for the transcription of early, intermediate and late genes. DNA-dependent RNA polymerase associates with the early transcription factor (ETF), itself composed of OPG118 and OPG133, thereby allowing the early genes transcription. Late transcription, and probably also intermediate transcription, require newly synthesized RNA polymerase. The chain is DNA-directed RNA polymerase 147 kDa polypeptide (OPG105) from Bos taurus (Bovine).